The sequence spans 118 residues: Inner membrane protein YhaI (118 aa).

Topologically, residues 1–25 are periplasmic; the sequence is MQWYLSVLKNYVGFSGRARRKEYWM. Residues 26 to 46 traverse the membrane as a helical segment; that stretch reads FTLINAIVGAIINVIQLILGL. A topological domain (cytoplasmic) is located at residue glutamate 47. The helical transmembrane segment at 48 to 68 threads the bilayer; that stretch reads LPYLSMLYLLATFLPVLALAI. Residues 69-77 lie on the Periplasmic side of the membrane; it reads RRLHDTDRS. The helical transmembrane segment at 78 to 98 threads the bilayer; sequence GAWALLFFVPFIGWLVLLVFF. The Cytoplasmic portion of the chain corresponds to 99-118; sequence CTEGTSGSNRYGNDPKFGSN.

It to E.coli YhaH.

The protein localises to the cell inner membrane. This is Inner membrane protein YhaI (yhaI) from Escherichia coli O157:H7.